Reading from the N-terminus, the 227-residue chain is Cytochrome c oxidase subunit 2 (227 aa).

Residues 1–14 (MAYPMQLGFQDATS) lie on the Mitochondrial intermembrane side of the membrane. A helical transmembrane segment spans residues 15–45 (PIMEELLHFHDHTLMIVFLISSLVLYIISLM). Topologically, residues 46–59 (LTTKLTHTSTMDAQ) are mitochondrial matrix. The chain crosses the membrane as a helical span at residues 60 to 87 (EVETIWTILPAIILILIALPSLRILYMM). The Mitochondrial intermembrane segment spans residues 88–227 (DEINNPSLTV…YFEKWSASML (140 aa)). 6 residues coordinate Cu cation: H161, C196, E198, C200, H204, and M207. E198 is a binding site for Mg(2+). The residue at position 218 (Y218) is a Phosphotyrosine.

The protein belongs to the cytochrome c oxidase subunit 2 family. In terms of assembly, component of the cytochrome c oxidase (complex IV, CIV), a multisubunit enzyme composed of 14 subunits. The complex is composed of a catalytic core of 3 subunits MT-CO1, MT-CO2 and MT-CO3, encoded in the mitochondrial DNA, and 11 supernumerary subunits COX4I, COX5A, COX5B, COX6A, COX6B, COX6C, COX7A, COX7B, COX7C, COX8 and NDUFA4, which are encoded in the nuclear genome. The complex exists as a monomer or a dimer and forms supercomplexes (SCs) in the inner mitochondrial membrane with NADH-ubiquinone oxidoreductase (complex I, CI) and ubiquinol-cytochrome c oxidoreductase (cytochrome b-c1 complex, complex III, CIII), resulting in different assemblies (supercomplex SCI(1)III(2)IV(1) and megacomplex MCI(2)III(2)IV(2)). Found in a complex with TMEM177, COA6, COX18, COX20, SCO1 and SCO2. Interacts with TMEM177 in a COX20-dependent manner. Interacts with COX20. Interacts with COX16. It depends on Cu cation as a cofactor.

It is found in the mitochondrion inner membrane. The enzyme catalyses 4 Fe(II)-[cytochrome c] + O2 + 8 H(+)(in) = 4 Fe(III)-[cytochrome c] + 2 H2O + 4 H(+)(out). Its function is as follows. Component of the cytochrome c oxidase, the last enzyme in the mitochondrial electron transport chain which drives oxidative phosphorylation. The respiratory chain contains 3 multisubunit complexes succinate dehydrogenase (complex II, CII), ubiquinol-cytochrome c oxidoreductase (cytochrome b-c1 complex, complex III, CIII) and cytochrome c oxidase (complex IV, CIV), that cooperate to transfer electrons derived from NADH and succinate to molecular oxygen, creating an electrochemical gradient over the inner membrane that drives transmembrane transport and the ATP synthase. Cytochrome c oxidase is the component of the respiratory chain that catalyzes the reduction of oxygen to water. Electrons originating from reduced cytochrome c in the intermembrane space (IMS) are transferred via the dinuclear copper A center (CU(A)) of subunit 2 and heme A of subunit 1 to the active site in subunit 1, a binuclear center (BNC) formed by heme A3 and copper B (CU(B)). The BNC reduces molecular oxygen to 2 water molecules using 4 electrons from cytochrome c in the IMS and 4 protons from the mitochondrial matrix. The sequence is that of Cytochrome c oxidase subunit 2 (MT-CO2) from Boselaphus tragocamelus (Nilgai).